A 1312-amino-acid chain; its full sequence is Beta-N-acetylhexosaminidase (1312 aa).

An N-terminal signal peptide occupies residues 1–33; that stretch reads MKHEKQQRFSIRKYAVGAASVLIGFAFQAQTVA. The segment covering 38–59 has biased composition (polar residues); that stretch reads TPTTTENQPTIHTVSDSPQSSE. Residues 38-178 are disordered; that stretch reads TPTTTENQPT…ATEAGKERAA (141 aa). A compositionally biased stretch (basic and acidic residues) spans 118-177; the sequence is AEKETANKKAEEASPKKEEAKEVDSKESNTDKTDKDKPAKKDEAKAEADKPATEAGKERA. Catalytic domain regions lie at residues 176–616 and 621–1046; these read RAAT…TPEA and EAKR…PAVT. 2 consecutive G5 domains span residues 1059-1138 and 1150-1230; these read NVET…GAPV and TTEV…GTMV. The disordered stretch occupies residues 1244-1290; that stretch reads EEKPKLEIPSQPAPSTAPAEESKVLPQDPAPVVTEKKLPETGTHDSA. Residues 1277–1286 show a composition bias toward basic and acidic residues; it reads TEKKLPETGT. The LPXTG sorting signal motif lies at 1281 to 1285; the sequence is LPETG. Pentaglycyl murein peptidoglycan amidated threonine is present on Thr1284. A propeptide spans 1285–1312 (removed by sortase); that stretch reads GTHDSAGLVVAGLMSTLAAYGLTKRKED.

The protein belongs to the glycosyl hydrolase 20 family.

Its subcellular location is the secreted. The protein resides in the cell wall. The catalysed reaction is Hydrolysis of terminal non-reducing N-acetyl-D-hexosamine residues in N-acetyl-beta-D-hexosaminides.. This is Beta-N-acetylhexosaminidase (strH) from Streptococcus pneumoniae serotype 4 (strain ATCC BAA-334 / TIGR4).